A 256-amino-acid polypeptide reads, in one-letter code: DNA repair protein RecO (256 aa).

It belongs to the RecO family.

Its function is as follows. Involved in DNA repair and RecF pathway recombination. In Pelotomaculum thermopropionicum (strain DSM 13744 / JCM 10971 / SI), this protein is DNA repair protein RecO.